A 326-amino-acid chain; its full sequence is Diaminopimelate epimerase (326 aa).

Substrate contacts are provided by N13 and N72. C81 functions as the Proton donor in the catalytic mechanism. Substrate is bound by residues 82–83, N169, N205, and 223–224; these read GN and ER. The Proton acceptor role is filled by C232. 233 to 234 contacts substrate; the sequence is GT.

This sequence belongs to the diaminopimelate epimerase family. Homodimer.

It is found in the cytoplasm. The catalysed reaction is (2S,6S)-2,6-diaminopimelate = meso-2,6-diaminopimelate. It participates in amino-acid biosynthesis; L-lysine biosynthesis via DAP pathway; DL-2,6-diaminopimelate from LL-2,6-diaminopimelate: step 1/1. Functionally, catalyzes the stereoinversion of LL-2,6-diaminopimelate (L,L-DAP) to meso-diaminopimelate (meso-DAP), a precursor of L-lysine and an essential component of the bacterial peptidoglycan. This chain is Diaminopimelate epimerase, found in Enterococcus faecalis (strain ATCC 700802 / V583).